The sequence spans 97 residues: Nucleoid-associated protein HPP12_0031 (97 aa).

This sequence belongs to the YbaB/EbfC family. Homodimer.

It localises to the cytoplasm. Its subcellular location is the nucleoid. In terms of biological role, binds to DNA and alters its conformation. May be involved in regulation of gene expression, nucleoid organization and DNA protection. This chain is Nucleoid-associated protein HPP12_0031, found in Helicobacter pylori (strain P12).